We begin with the raw amino-acid sequence, 535 residues long: CTP synthase (535 aa).

Residues 1–268 form an amidoligase domain region; the sequence is MPNKYIVVTG…VSKILSRLKL (268 aa). Ser-14 serves as a coordination point for CTP. Ser-14 lines the UTP pocket. ATP is bound at residue 15-20; that stretch reads SVGKGT. Tyr-55 is an L-glutamine binding site. Asp-72 is a binding site for ATP. Residues Asp-72 and Glu-142 each contribute to the Mg(2+) site. CTP contacts are provided by residues 149 to 151, 189 to 194, and Lys-225; these read DIE and KTKPLQ. Residues 189–194 and Lys-225 each bind UTP; that span reads KTKPLQ. Val-243 is a binding site for ATP. One can recognise a Glutamine amidotransferase type-1 domain in the interval 302-535; sequence YTKLKDSYIS…LGFIRAVASL (234 aa). Residue Gly-359 participates in L-glutamine binding. The Nucleophile; for glutamine hydrolysis role is filled by Cys-386. Residues 387-390, Glu-410, and Arg-467 each bind L-glutamine; that span reads FGFQ. Residues His-511 and Glu-513 contribute to the active site.

This sequence belongs to the CTP synthase family. Homotetramer in the presence of ATP and UTP. The enzyme dissociates into homodimers in the absence of substrate nucleotides.

It catalyses the reaction UTP + L-glutamine + ATP + H2O = CTP + L-glutamate + ADP + phosphate + 2 H(+). The enzyme catalyses L-glutamine + H2O = L-glutamate + NH4(+). It carries out the reaction UTP + NH4(+) + ATP = CTP + ADP + phosphate + 2 H(+). The protein operates within pyrimidine metabolism; CTP biosynthesis via de novo pathway; CTP from UDP: step 2/2. Its activity is regulated as follows. Allosterically activated by GTP, when glutamine is the substrate; GTP has no effect on the reaction when ammonia is the substrate. The allosteric effector GTP functions by stabilizing the protein conformation that binds the tetrahedral intermediate(s) formed during glutamine hydrolysis. Inhibited by the product CTP, via allosteric rather than competitive inhibition. Functionally, catalyzes the ATP-dependent amination of UTP to CTP with either L-glutamine or ammonia as the source of nitrogen. Regulates intracellular CTP levels through interactions with the four ribonucleotide triphosphates. This Saccharolobus solfataricus (strain ATCC 35092 / DSM 1617 / JCM 11322 / P2) (Sulfolobus solfataricus) protein is CTP synthase.